We begin with the raw amino-acid sequence, 178 residues long: Ribosome maturation factor RimP (178 aa).

Belongs to the RimP family.

Its subcellular location is the cytoplasm. In terms of biological role, required for maturation of 30S ribosomal subunits. The sequence is that of Ribosome maturation factor RimP from Caulobacter vibrioides (strain ATCC 19089 / CIP 103742 / CB 15) (Caulobacter crescentus).